The primary structure comprises 643 residues: DNA gyrase subunit B (643 aa).

One can recognise a Toprim domain in the interval 428–542 (SEIFLVEGDS…AGYVYIAQPP (115 aa)). Mg(2+) contacts are provided by glutamate 434, aspartate 507, and aspartate 509.

It belongs to the type II topoisomerase GyrB family. As to quaternary structure, heterotetramer, composed of two GyrA and two GyrB chains. In the heterotetramer, GyrA contains the active site tyrosine that forms a transient covalent intermediate with DNA, while GyrB binds cofactors and catalyzes ATP hydrolysis. Mg(2+) serves as cofactor. It depends on Mn(2+) as a cofactor. Ca(2+) is required as a cofactor.

It is found in the cytoplasm. The enzyme catalyses ATP-dependent breakage, passage and rejoining of double-stranded DNA.. A type II topoisomerase that negatively supercoils closed circular double-stranded (ds) DNA in an ATP-dependent manner to modulate DNA topology and maintain chromosomes in an underwound state. Negative supercoiling favors strand separation, and DNA replication, transcription, recombination and repair, all of which involve strand separation. Also able to catalyze the interconversion of other topological isomers of dsDNA rings, including catenanes and knotted rings. Type II topoisomerases break and join 2 DNA strands simultaneously in an ATP-dependent manner. The protein is DNA gyrase subunit B of Staphylococcus epidermidis (strain ATCC 35984 / DSM 28319 / BCRC 17069 / CCUG 31568 / BM 3577 / RP62A).